Reading from the N-terminus, the 393-residue chain is MAEKVSFEEGKLQVPDKPVIPYIEGDGVGQDIWKNAQIVFDKAIAKVYGGHKQVIWREVLAGKKAYNETGNWLPNETLEIIKTHLLAIKGPLETPVGGGIRSLNVALRQELDLFACVRPVRYFKGVPSPLKHPEKTAITIFRENTEDIYAGIEWNAGTAEVQKVINFLQDDMQVKKIRFPKSSSIGIKPISIEGSQRLIRAAIEYALANNLTKVTLVHKGNIQKFTEGGFRKWGYELAKREYAAELASGQLVVDDIIADNFLQQILLKPERFDVVALTNLNGDYASDALAAQVGGIGISPGANINYQTGHAIFEATHGTAPDIAGQDLANPSSVLLSGCMLFDYIGWSKVSDLIMKAVEKAIANGQVTIDFAKELGVEALTTRQFSEVLLTYL.

D-threo-isocitrate contacts are provided by serine 102, asparagine 104, arginine 108, arginine 118, and arginine 142. Aspartate 283 is a binding site for Mg(2+).

The protein belongs to the isocitrate and isopropylmalate dehydrogenases family. As to quaternary structure, homodimer. It depends on Mg(2+) as a cofactor. Mn(2+) serves as cofactor.

The catalysed reaction is D-threo-isocitrate + NADP(+) = 2-oxoglutarate + CO2 + NADPH. Its function is as follows. Catalyzes the oxidative decarboxylation of isocitrate to 2-oxoglutarate and carbon dioxide with the concomitant reduction of NADP(+). The protein is Isocitrate dehydrogenase [NADP] (icd) of Streptococcus mutans serotype c (strain ATCC 700610 / UA159).